A 258-amino-acid polypeptide reads, in one-letter code: tRNA pseudouridine synthase A (258 aa).

Aspartate 52 (nucleophile) is an active-site residue. A substrate-binding site is contributed by tyrosine 110.

This sequence belongs to the tRNA pseudouridine synthase TruA family. As to quaternary structure, homodimer.

It catalyses the reaction uridine(38/39/40) in tRNA = pseudouridine(38/39/40) in tRNA. Formation of pseudouridine at positions 38, 39 and 40 in the anticodon stem and loop of transfer RNAs. This Francisella philomiragia subsp. philomiragia (strain ATCC 25017 / CCUG 19701 / FSC 153 / O#319-036) protein is tRNA pseudouridine synthase A.